We begin with the raw amino-acid sequence, 69 residues long: U2-agatoxin-Ao1c (69 aa).

An N-terminal signal peptide occupies residues 1–20 (MKAIISLLLISAMVFSMIEA). The propeptide occupies 21–34 (VPVEEGLQLFEGER). 3 cysteine pairs are disulfide-bonded: Cys-36–Cys-52, Cys-43–Cys-57, and Cys-51–Cys-67. Position 68 is a leucine amide (Leu-68).

Belongs to the neurotoxin 01 (U2-agtx) family. Expressed by the venom gland.

The protein resides in the secreted. Its function is as follows. Insect active toxin causing rapid but reversible paralysis in crickets. No activity shown in mammals. Does not show effect on mammalian voltage-gated calcium channels. In Agelena orientalis (Funnel-web spider), this protein is U2-agatoxin-Ao1c.